Consider the following 301-residue polypeptide: Pyridoxal 5'-phosphate synthase subunit PdxS (301 aa).

Asp31 contacts D-ribose 5-phosphate. Lys88 (schiff-base intermediate with D-ribose 5-phosphate) is an active-site residue. Gly160 serves as a coordination point for D-ribose 5-phosphate. Lys172 serves as a coordination point for D-glyceraldehyde 3-phosphate. Residues Gly221 and 242–243 (GS) each bind D-ribose 5-phosphate.

The protein belongs to the PdxS/SNZ family. In terms of assembly, in the presence of PdxT, forms a dodecamer of heterodimers.

It catalyses the reaction aldehydo-D-ribose 5-phosphate + D-glyceraldehyde 3-phosphate + L-glutamine = pyridoxal 5'-phosphate + L-glutamate + phosphate + 3 H2O + H(+). It functions in the pathway cofactor biosynthesis; pyridoxal 5'-phosphate biosynthesis. Its function is as follows. Catalyzes the formation of pyridoxal 5'-phosphate from ribose 5-phosphate (RBP), glyceraldehyde 3-phosphate (G3P) and ammonia. The ammonia is provided by the PdxT subunit. Can also use ribulose 5-phosphate and dihydroxyacetone phosphate as substrates, resulting from enzyme-catalyzed isomerization of RBP and G3P, respectively. This chain is Pyridoxal 5'-phosphate synthase subunit PdxS, found in Methanosarcina acetivorans (strain ATCC 35395 / DSM 2834 / JCM 12185 / C2A).